A 162-amino-acid chain; its full sequence is UPF0303 protein Arad_3071 (162 aa).

This sequence belongs to the UPF0303 family.

This is UPF0303 protein Arad_3071 from Rhizobium rhizogenes (strain K84 / ATCC BAA-868) (Agrobacterium radiobacter).